A 786-amino-acid chain; its full sequence is Sucrose synthase (786 aa).

The GT-B glycosyltransferase stretch occupies residues 259–736 (MIFSLVVLSP…ALKRVEERYN (478 aa)).

The protein belongs to the glycosyltransferase 1 family. Homotetramer.

It carries out the reaction an NDP-alpha-D-glucose + D-fructose = a ribonucleoside 5'-diphosphate + sucrose + H(+). Its function is as follows. Catalyzes the reversible conversion of sucrose and a nucleotide disphosphate (NDP) into fructose and NDP-glucose; although the reaction is freely reversible in vitro, the physiological reaction seems to be sucrose cleavage. Unlike characterized plant enzymes prefers ADP as a cosubstrate, whereas plants prefer UDP. Its preference for ADP over UDP suggests it may directly link sucrose and glycogen metabolism. This Denitrovibrio acetiphilus (strain DSM 12809 / NBRC 114555 / N2460) protein is Sucrose synthase.